Reading from the N-terminus, the 399-residue chain is Small ribosomal subunit protein uS3m (399 aa).

The protein belongs to the universal ribosomal protein uS3 family.

It localises to the mitochondrion. Its function is as follows. Essential for mitochondrial protein synthesis and required for the maturation of small ribosomal subunits. This Penicillium urticae protein is Small ribosomal subunit protein uS3m.